A 426-amino-acid polypeptide reads, in one-letter code: Mannose-1-phosphate guanyltransferase alpha-B (426 aa).

It belongs to the transferase hexapeptide repeat family.

It catalyses the reaction alpha-D-mannose 1-phosphate + GTP + H(+) = GDP-alpha-D-mannose + diphosphate. It participates in nucleotide-sugar biosynthesis; GDP-alpha-D-mannose biosynthesis; GDP-alpha-D-mannose from alpha-D-mannose 1-phosphate (GTP route): step 1/1. The chain is Mannose-1-phosphate guanyltransferase alpha-B (gmppa-b) from Xenopus laevis (African clawed frog).